The following is a 271-amino-acid chain: Effector CFEM6 (271 aa).

A signal peptide spans 1–17 (MKYSMITLGAFAMMAVA). The CFEM domain occupies 18 to 111 (QLSSLPACGQ…LGPATAVVAS (94 aa)). 4 disulfide bridges follow: Cys-25–Cys-68, Cys-29–Cys-63, Cys-42–Cys-49, and Cys-51–Cys-84. Asp-46 is a heme binding site. Ser-247 carries GPI-anchor amidated serine lipidation. Residues 248 to 271 (SAGGARQTAFAGLAAAAGFAAIIL) constitute a propeptide, removed in mature form.

This sequence belongs to the RBT5 family.

The protein localises to the cell membrane. Its subcellular location is the secreted. It is found in the host nucleus. The protein resides in the host cell membrane. It localises to the host chloroplast envelope. In terms of biological role, appears to function during host infection, and may play a role in suppressing the host immune response. This is Effector CFEM6 from Marssonina brunnea f. sp. multigermtubi (strain MB_m1) (Marssonina leaf spot fungus).